The chain runs to 445 residues: Phosphoglucosamine mutase (445 aa).

The active-site Phosphoserine intermediate is S102. Residues S102, D241, D243, and D245 each contribute to the Mg(2+) site. Residue S102 is modified to Phosphoserine.

The protein belongs to the phosphohexose mutase family. Requires Mg(2+) as cofactor. Post-translationally, activated by phosphorylation.

It catalyses the reaction alpha-D-glucosamine 1-phosphate = D-glucosamine 6-phosphate. Functionally, catalyzes the conversion of glucosamine-6-phosphate to glucosamine-1-phosphate. The sequence is that of Phosphoglucosamine mutase from Shewanella sp. (strain W3-18-1).